The following is a 234-amino-acid chain: Glucosamine-6-phosphate deaminase (234 aa).

Asp-63 acts as the Proton acceptor; for enolization step in catalysis. Catalysis depends on Asn-129, which acts as the For ring-opening step. The active-site Proton acceptor; for ring-opening step is the His-131. Catalysis depends on Glu-136, which acts as the For ring-opening step.

This sequence belongs to the glucosamine/galactosamine-6-phosphate isomerase family. NagB subfamily.

It carries out the reaction alpha-D-glucosamine 6-phosphate + H2O = beta-D-fructose 6-phosphate + NH4(+). It functions in the pathway amino-sugar metabolism; N-acetylneuraminate degradation; D-fructose 6-phosphate from N-acetylneuraminate: step 5/5. In terms of biological role, catalyzes the reversible isomerization-deamination of glucosamine 6-phosphate (GlcN6P) to form fructose 6-phosphate (Fru6P) and ammonium ion. The polypeptide is Glucosamine-6-phosphate deaminase (Listeria monocytogenes serovar 1/2a (strain ATCC BAA-679 / EGD-e)).